A 178-amino-acid polypeptide reads, in one-letter code: Caveolin-1 (178 aa).

Ser2 is subject to N-acetylserine. Phosphoserine is present on Ser2. The segment at 2 to 94 (SGGKYVDSEG…WKASFTTFTV (93 aa)) is required for homooligomerization. Topologically, residues 2 to 104 (SGGKYVDSEG…TKYWFYRLLS (103 aa)) are cytoplasmic. N6-acetyllysine; alternate is present on Lys5. Lys5 participates in a covalent cross-link: Glycyl lysine isopeptide (Lys-Gly) (interchain with G-Cter in ubiquitin); alternate. Tyr6 is subject to Phosphotyrosine. The residue at position 9 (Ser9) is a Phosphoserine. Tyr14 carries the post-translational modification Phosphotyrosine; by ABL1. The residue at position 25 (Tyr25) is a Phosphotyrosine. Residues Lys26, Lys30, Lys39, Lys47, and Lys57 each participate in a glycyl lysine isopeptide (Lys-Gly) (interchain with G-Cter in ubiquitin) cross-link. The interval 82–94 (DGIWKASFTTFTV) is interaction with CAVIN3. Residues 105–125 (GIFGIPMALIWGVYFAILSFL) constitute an intramembrane region (helical). The Cytoplasmic portion of the chain corresponds to 126–178 (HIWAVVPCIKSFLIEIQCISRVYSIYVHTFCDPLFEAIGKIFSNIRISTQKEI). Residues 131–142 (VPCIKSFLIEIQ) are interacts with SPRY1, SPRY2, SPRY3 and SPRY4. 3 S-palmitoyl cysteine lipidation sites follow: Cys133, Cys143, and Cys156. The segment at 149–160 (SIYVHTFCDPLF) is interacts with SPRY1, SPRY2, and SPRY4. An interacts with SPRY1, SPRY2, SPRY3 and SPRY4 region spans residues 167-178 (FSNIRISTQKEI).

It belongs to the caveolin family. As to quaternary structure, homooligomer. Interacts with GLIPR2. Interacts with NOSTRIN. Interacts with SNAP25 and STX1A. Interacts (via the N-terminus) with DPP4; the interaction is direct. Interacts with CTNNB1, CDH1 and JUP. Interacts with PACSIN2; this interaction induces membrane tubulation. Interacts with SLC7A9. Interacts with BMX and BTK. Interacts with TGFBR1. Interacts with CAVIN3 (via leucine-zipper domain) in a cholesterol-sensitive manner. Interacts with CAVIN1. Interacts with EHD2 in a cholesterol-dependent manner. Forms a ternary complex with UBXN6 and VCP; mediates CAV1 targeting to lysosomes for degradation. Interacts with ABCG1; this interaction regulates ABCG1-mediated cholesterol efflux. Interacts with NEU3; this interaction enhances NEU3 sialidase activity within caveola. Interacts (via C-terminus) with SPRY1, SPRY2 (via C-terminus), SPRY3, and SPRY4. Interacts with IGFBP5; this interaction allows trafficking of IGFBP5 from the plasma membrane to the nucleus. In terms of processing, phosphorylated at Tyr-14 by ABL1 in response to oxidative stress. Ubiquitinated. Undergo monoubiquitination and multi- and/or polyubiquitination. Monoubiquitination of N-terminal lysines promotes integration in a ternary complex with UBXN6 and VCP which promotes oligomeric CAV1 targeting to lysosomes for degradation. Ubiquitinated by ZNRF1; leading to degradation and modulation of the TLR4-mediated immune response.

It is found in the golgi apparatus membrane. It localises to the cell membrane. The protein localises to the membrane. Its subcellular location is the caveola. The protein resides in the membrane raft. Its function is as follows. May act as a scaffolding protein within caveolar membranes. Forms a stable heterooligomeric complex with CAV2 that targets to lipid rafts and drives caveolae formation. Mediates the recruitment of CAVIN proteins (CAVIN1/2/3/4) to the caveolae. Interacts directly with G-protein alpha subunits and can functionally regulate their activity. Involved in the costimulatory signal essential for T-cell receptor (TCR)-mediated T-cell activation. Its binding to DPP4 induces T-cell proliferation and NF-kappa-B activation in a T-cell receptor/CD3-dependent manner. Recruits CTNNB1 to caveolar membranes and may regulate CTNNB1-mediated signaling through the Wnt pathway. Negatively regulates TGFB1-mediated activation of SMAD2/3 by mediating the internalization of TGFBR1 from membrane rafts leading to its subsequent degradation. Binds 20(S)-hydroxycholesterol (20(S)-OHC). The chain is Caveolin-1 (CAV1) from Echinops telfairi (Lesser hedgehog tenrec).